A 406-amino-acid polypeptide reads, in one-letter code: Probable delta-aminolevulinic acid dehydratase 2, chloroplastic (406 aa).

Residues 1–34 (MTSSMFRSPCKIPSVKGFEQKSYVGLKAASYNVR) constitute a chloroplast transit peptide. Lysine 275 functions as the Schiff-base intermediate with substrate in the catalytic mechanism. Positions 285 and 291 each coordinate 5-aminolevulinate. A Mg(2+)-binding site is contributed by glutamate 307. Lysine 322 serves as the catalytic Schiff-base intermediate with substrate. Positions 348 and 387 each coordinate 5-aminolevulinate.

This sequence belongs to the ALAD family. In terms of assembly, homooctamer. The cofactor is Mg(2+).

It is found in the plastid. The protein resides in the chloroplast. The enzyme catalyses 2 5-aminolevulinate = porphobilinogen + 2 H2O + H(+). The protein operates within porphyrin-containing compound metabolism; protoporphyrin-IX biosynthesis; coproporphyrinogen-III from 5-aminolevulinate: step 1/4. It functions in the pathway porphyrin-containing compound metabolism; chlorophyll biosynthesis. In terms of biological role, catalyzes an early step in the biosynthesis of tetrapyrroles. Binds two molecules of 5-aminolevulinate per subunit, each at a distinct site, and catalyzes their condensation to form porphobilinogen. The protein is Probable delta-aminolevulinic acid dehydratase 2, chloroplastic (HEMB2) of Arabidopsis thaliana (Mouse-ear cress).